The following is an 81-amino-acid chain: MNPLISAASVIAAGLAVGLASIGPGVGQGTAAGQAVEGIARQPEAEGKIRGTLLLSLAFMEALTIYGLVVALALLFANPFV.

Transmembrane regions (helical) follow at residues 3–23 (PLISAASVIAAGLAVGLASIG) and 57–77 (LAFMEALTIYGLVVALALLFA).

This sequence belongs to the ATPase C chain family. F-type ATPases have 2 components, F(1) - the catalytic core - and F(0) - the membrane proton channel. F(1) has five subunits: alpha(3), beta(3), gamma(1), delta(1), epsilon(1). F(0) has four main subunits: a(1), b(1), b'(1) and c(10-14). The alpha and beta chains form an alternating ring which encloses part of the gamma chain. F(1) is attached to F(0) by a central stalk formed by the gamma and epsilon chains, while a peripheral stalk is formed by the delta, b and b' chains.

The protein resides in the plastid. The protein localises to the chloroplast thylakoid membrane. F(1)F(0) ATP synthase produces ATP from ADP in the presence of a proton or sodium gradient. F-type ATPases consist of two structural domains, F(1) containing the extramembraneous catalytic core and F(0) containing the membrane proton channel, linked together by a central stalk and a peripheral stalk. During catalysis, ATP synthesis in the catalytic domain of F(1) is coupled via a rotary mechanism of the central stalk subunits to proton translocation. Its function is as follows. Key component of the F(0) channel; it plays a direct role in translocation across the membrane. A homomeric c-ring of between 10-14 subunits forms the central stalk rotor element with the F(1) delta and epsilon subunits. This is ATP synthase subunit c, chloroplastic from Acorus calamus var. americanus (American sweet flag).